Reading from the N-terminus, the 292-residue chain is Tetratricopeptide repeat protein 1 (292 aa).

Basic and acidic residues-rich tracts occupy residues 1-12 and 47-64; these read MEEKSEDCKVPE and KAAE…ECFH. The tract at residues 1–125 is disordered; the sequence is MEEKSEDCKV…SAKLKEEGNE (125 aa). Residues 88–98 show a composition bias toward acidic residues; sequence SSSELDEEYLI. Position 90 is a phosphoserine (Ser-90). Positions 99-125 are enriched in basic and acidic residues; sequence ELEKNMPEEEKQKRREESAKLKEEGNE. TPR repeat units follow at residues 116–149, 155–188, and 189–222; these read SAKL…CPAC, SVLF…NPTY, and IRAI…DPSV.

In terms of assembly, interacts with the GAP domain of NF1. Interacts (via TPR repeats) with HSP90AA1 and HSPA8.

This is Tetratricopeptide repeat protein 1 (Ttc1) from Mus musculus (Mouse).